Here is a 354-residue protein sequence, read N- to C-terminus: Regulatory protein RapD (354 aa).

TPR repeat units follow at residues 64–105 (FENQ…VKTA), 107–126 (KHAV…IHNT), 130–163 (ADLY…YLHQ), 171–204 (ITCK…TQQL), 211–244 (CHAY…QEFE), and 321–353 (IEAW…FIMR).

This sequence belongs to the Rap family.

The protein localises to the cytoplasm. The chain is Regulatory protein RapD (rapD) from Bacillus subtilis (strain 168).